The chain runs to 123 residues: Large ribosomal subunit protein uL14 (123 aa).

It belongs to the universal ribosomal protein uL14 family. Part of the 50S ribosomal subunit. Forms a cluster with proteins L3 and L19. In the 70S ribosome, L14 and L19 interact and together make contacts with the 16S rRNA in bridges B5 and B8.

Functionally, binds to 23S rRNA. Forms part of two intersubunit bridges in the 70S ribosome. The chain is Large ribosomal subunit protein uL14 from Cronobacter sakazakii (strain ATCC BAA-894) (Enterobacter sakazakii).